We begin with the raw amino-acid sequence, 795 residues long: Oleate activated transcription factor 3 (795 aa).

The segment at residues 14–43 (CSNCKRRKSRCDRGKPACGNCIRLGNRETC) is a DNA-binding region (zn(2)-C6 fungal-type).

It belongs to the OAF3 family.

Its subcellular location is the cytoplasm. It is found in the nucleus. The protein localises to the mitochondrion. In terms of biological role, transcriptional inhibitor with a significantly increased number of target genes in response to oleate. This is Oleate activated transcription factor 3 (OAF3) from Eremothecium gossypii (strain ATCC 10895 / CBS 109.51 / FGSC 9923 / NRRL Y-1056) (Yeast).